We begin with the raw amino-acid sequence, 545 residues long: T-complex protein 1 subunit gamma (545 aa).

The residue at position 1 (Met-1) is an N-acetylmethionine. Residues 1–24 form a disordered region; sequence MMGHRPVLVLSQNTKRESGRKVQS. Ser-11 carries the post-translational modification Phosphoserine. Lys-15 is covalently cross-linked (Glycyl lysine isopeptide (Lys-Gly) (interchain with G-Cter in SUMO2)). Gly-42 lines the ADP pocket. Gly-42 serves as a coordination point for ATP. Asp-93 contributes to the Mg(2+) binding site. 6 residues coordinate ADP: Gly-94, Thr-95, Thr-96, Ser-97, Thr-162, and Lys-163. Residues Gly-94, Thr-95, and Thr-96 each contribute to the ATP site. Ser-170 is modified (phosphoserine). Lys-222 carries the post-translational modification N6-acetyllysine. Residues Ser-243 and Ser-244 each carry the phosphoserine modification. Tyr-247 carries the phosphotyrosine modification. Glycyl lysine isopeptide (Lys-Gly) (interchain with G-Cter in SUMO2) cross-links involve residues Lys-248 and Lys-249. Phosphoserine is present on Ser-252. An intrachain disulfide couples Cys-366 to Cys-372. A Glycyl lysine isopeptide (Lys-Gly) (interchain with G-Cter in SUMO2) cross-link involves residue Lys-381. Position 411 (Gly-411) interacts with ADP. Gly-411 provides a ligand contact to ATP. Thr-430 and Thr-459 each carry phosphothreonine. Positions 482, 483, 497, and 502 each coordinate ADP. Residue Gly-482 participates in ATP binding. Position 497 (Glu-497) interacts with ATP. The tract at residues 526–545 is disordered; that stretch reads HKKKGDDQSRQGGAPDAGQE.

It belongs to the TCP-1 chaperonin family. As to quaternary structure, component of the chaperonin-containing T-complex (TRiC), a hexadecamer composed of two identical back-to-back stacked rings enclosing a protein folding chamber. Each ring is made up of eight different subunits: TCP1/CCT1, CCT2, CCT3, CCT4, CCT5, CCT6A/CCT6, CCT7, CCT8. Interacts with PACRG. Interacts with DNAAF4. Interacts with DLEC1.

The protein resides in the cytoplasm. The catalysed reaction is ATP + H2O = ADP + phosphate + H(+). Component of the chaperonin-containing T-complex (TRiC), a molecular chaperone complex that assists the folding of actin, tubulin and other proteins upon ATP hydrolysis. The TRiC complex mediates the folding of WRAP53/TCAB1, thereby regulating telomere maintenance. As part of the TRiC complex may play a role in the assembly of BBSome, a complex involved in ciliogenesis regulating transports vesicles to the cilia. The chain is T-complex protein 1 subunit gamma (CCT3) from Pongo abelii (Sumatran orangutan).